Here is a 297-residue protein sequence, read N- to C-terminus: tRNA uridine(34) hydroxylase (297 aa).

The Rhodanese domain maps to 133–228; it reads SGDEVVFFDG…YGETFKDQGL (96 aa). Cys188 (cysteine persulfide intermediate) is an active-site residue.

The protein belongs to the TrhO family.

The catalysed reaction is uridine(34) in tRNA + AH2 + O2 = 5-hydroxyuridine(34) in tRNA + A + H2O. Its function is as follows. Catalyzes oxygen-dependent 5-hydroxyuridine (ho5U) modification at position 34 in tRNAs. In Pseudarthrobacter chlorophenolicus (strain ATCC 700700 / DSM 12829 / CIP 107037 / JCM 12360 / KCTC 9906 / NCIMB 13794 / A6) (Arthrobacter chlorophenolicus), this protein is tRNA uridine(34) hydroxylase.